We begin with the raw amino-acid sequence, 259 residues long: 3-methyl-2-oxobutanoate hydroxymethyltransferase (259 aa).

Mg(2+) is bound by residues D44 and D83. Residues 44-45 (DS), D83, and K112 contribute to the 3-methyl-2-oxobutanoate site. Residue E114 coordinates Mg(2+). Catalysis depends on E177, which acts as the Proton acceptor.

This sequence belongs to the PanB family. In terms of assembly, homodecamer; pentamer of dimers. Requires Mg(2+) as cofactor.

The protein resides in the cytoplasm. The enzyme catalyses 3-methyl-2-oxobutanoate + (6R)-5,10-methylene-5,6,7,8-tetrahydrofolate + H2O = 2-dehydropantoate + (6S)-5,6,7,8-tetrahydrofolate. The protein operates within cofactor biosynthesis; (R)-pantothenate biosynthesis; (R)-pantoate from 3-methyl-2-oxobutanoate: step 1/2. Catalyzes the reversible reaction in which hydroxymethyl group from 5,10-methylenetetrahydrofolate is transferred onto alpha-ketoisovalerate to form ketopantoate. This chain is 3-methyl-2-oxobutanoate hydroxymethyltransferase, found in Nitratiruptor sp. (strain SB155-2).